The following is a 259-amino-acid chain: Thiazole synthase (259 aa).

The active-site Schiff-base intermediate with DXP is Lys99. 1-deoxy-D-xylulose 5-phosphate contacts are provided by residues Gly161, 187–188 (AG), and 209–210 (NT).

Belongs to the ThiG family. In terms of assembly, homotetramer. Forms heterodimers with either ThiH or ThiS.

It is found in the cytoplasm. It carries out the reaction [ThiS sulfur-carrier protein]-C-terminal-Gly-aminoethanethioate + 2-iminoacetate + 1-deoxy-D-xylulose 5-phosphate = [ThiS sulfur-carrier protein]-C-terminal Gly-Gly + 2-[(2R,5Z)-2-carboxy-4-methylthiazol-5(2H)-ylidene]ethyl phosphate + 2 H2O + H(+). It functions in the pathway cofactor biosynthesis; thiamine diphosphate biosynthesis. Catalyzes the rearrangement of 1-deoxy-D-xylulose 5-phosphate (DXP) to produce the thiazole phosphate moiety of thiamine. Sulfur is provided by the thiocarboxylate moiety of the carrier protein ThiS. In vitro, sulfur can be provided by H(2)S. The polypeptide is Thiazole synthase (Sulfurimonas denitrificans (strain ATCC 33889 / DSM 1251) (Thiomicrospira denitrificans (strain ATCC 33889 / DSM 1251))).